Consider the following 317-residue polypeptide: Transaldolase (317 aa).

The Schiff-base intermediate with substrate role is filled by lysine 132.

Belongs to the transaldolase family. Type 1 subfamily. As to quaternary structure, homodimer.

The protein resides in the cytoplasm. The catalysed reaction is D-sedoheptulose 7-phosphate + D-glyceraldehyde 3-phosphate = D-erythrose 4-phosphate + beta-D-fructose 6-phosphate. The protein operates within carbohydrate degradation; pentose phosphate pathway; D-glyceraldehyde 3-phosphate and beta-D-fructose 6-phosphate from D-ribose 5-phosphate and D-xylulose 5-phosphate (non-oxidative stage): step 2/3. Functionally, transaldolase is important for the balance of metabolites in the pentose-phosphate pathway. In Shewanella amazonensis (strain ATCC BAA-1098 / SB2B), this protein is Transaldolase.